A 403-amino-acid polypeptide reads, in one-letter code: Vacuole membrane protein 1 homolog (403 aa).

The stretch at 7–33 (IVLSNEKDIQLRIQQLEERKEKRKNVK) forms a coiled coil. The next 8 membrane-spanning stretches (helical) occupy residues 65-85 (FLLF…YVPG), 102-122 (IWWV…LHTF), 150-170 (ANSF…WMIL), 175-195 (WAAL…YFVA), 240-260 (LIGN…NPLF), 263-283 (AGIT…ATFI), 294-314 (ACFV…SFIE), and 348-368 (VGLA…MSIV).

It belongs to the VMP1 family.

Its subcellular location is the membrane. It is found in the endoplasmic reticulum. It carries out the reaction a 1,2-diacyl-sn-glycero-3-phospho-L-serine(in) = a 1,2-diacyl-sn-glycero-3-phospho-L-serine(out). The enzyme catalyses cholesterol(in) = cholesterol(out). The catalysed reaction is a 1,2-diacyl-sn-glycero-3-phosphocholine(in) = a 1,2-diacyl-sn-glycero-3-phosphocholine(out). It catalyses the reaction a 1,2-diacyl-sn-glycero-3-phosphoethanolamine(in) = a 1,2-diacyl-sn-glycero-3-phosphoethanolamine(out). Functionally, phospholipid scramblase involved in lipid homeostasis and membrane dynamics processes. Required for autophagosome formation: participates in early stages of autophagosome biogenesis at the endoplasmic reticulum (ER) membrane by reequilibrating the leaflets of the ER as lipids are extracted. In addition to autophagy, involved in other processes in which phospholipid scramblase activity is required. The chain is Vacuole membrane protein 1 homolog from Dictyostelium discoideum (Social amoeba).